Here is a 181-residue protein sequence, read N- to C-terminus: Oligoribonuclease (181 aa).

Positions 8–171 constitute an Exonuclease domain; that stretch reads LIWIDMEMTG…ADIYDSIEEL (164 aa). Residue Y129 is part of the active site.

Belongs to the oligoribonuclease family.

It is found in the cytoplasm. 3'-to-5' exoribonuclease specific for small oligoribonucleotides. The protein is Oligoribonuclease of Nitrosomonas europaea (strain ATCC 19718 / CIP 103999 / KCTC 2705 / NBRC 14298).